A 198-amino-acid chain; its full sequence is Nicotinamidase 3 (198 aa).

Belongs to the isochorismatase family.

It catalyses the reaction nicotinamide + H2O = nicotinate + NH4(+). The protein operates within cofactor biosynthesis; nicotinate biosynthesis; nicotinate from nicotinamide: step 1/1. Catalyzes the deamidation of nicotinamide, an early step in the NAD(+) salvage pathway. Prevents the accumulation of intracellular nicotinamide, a known inhibitor of poly(ADP-ribose) polymerases (PARP enzymes). The chain is Nicotinamidase 3 from Arabidopsis thaliana (Mouse-ear cress).